The sequence spans 408 residues: Photox toxin (408 aa).

The segment at 168–196 (NNQQHIKDSDGRKPVNNMPPPPPPPMADK) is disordered. The segment covering 184–193 (NMPPPPPPPM) has biased composition (pro residues). The region spanning 190-393 (PPPMADKTQK…LRLTDDASAD (204 aa)) is the TR mART core domain. Residues Arg-288, Ser-318, and Glu-355 contribute to the active site.

This sequence in the C-terminal section; belongs to the SpvB family.

The enzyme catalyses L-arginyl-[protein] + NAD(+) = N(omega)-(ADP-D-ribosyl)-L-arginyl-[protein] + nicotinamide + H(+). Mono-ADP-ribosylates chicken skeletal alpha-actin and human non-skeletal beta- and gamma-actin. Mono-ADP-ribosylates 'Arg-177' of yeast actin, blocking its ability to polymerize. Does not possess NAD(+)-glycohydrolase activity, unlike most mART enzymes. Upon expression in S.cerevisiae almost completely inhibits growth. The protein is Photox toxin (phxA) of Photorhabdus laumondii subsp. laumondii (strain DSM 15139 / CIP 105565 / TT01) (Photorhabdus luminescens subsp. laumondii).